Reading from the N-terminus, the 349-residue chain is Isopentenyl-diphosphate delta-isomerase (349 aa).

A substrate-binding site is contributed by Arg12 to Lys13. FMN contacts are provided by residues Ser69, Ser70–Thr72, Ser101, and Asn129. A substrate-binding site is contributed by Ser101–Arg103. Gln164 contributes to the substrate binding site. Mg(2+) is bound at residue Glu165. FMN contacts are provided by residues Lys196, Thr226, Gly279–Arg281, and Ala300–Ala301.

This sequence belongs to the IPP isomerase type 2 family. As to quaternary structure, homooctamer. Dimer of tetramers. Requires FMN as cofactor. It depends on NADPH as a cofactor. The cofactor is Mg(2+).

It localises to the cytoplasm. The enzyme catalyses isopentenyl diphosphate = dimethylallyl diphosphate. Its function is as follows. Involved in the biosynthesis of isoprenoids. Catalyzes the 1,3-allylic rearrangement of the homoallylic substrate isopentenyl (IPP) to its allylic isomer, dimethylallyl diphosphate (DMAPP). The sequence is that of Isopentenyl-diphosphate delta-isomerase from Paracoccus zeaxanthinifaciens.